A 145-amino-acid polypeptide reads, in one-letter code: Large ribosomal subunit protein uL11 (145 aa).

Belongs to the universal ribosomal protein uL11 family. Part of the ribosomal stalk of the 50S ribosomal subunit. Interacts with L10 and the large rRNA to form the base of the stalk. L10 forms an elongated spine to which L12 dimers bind in a sequential fashion forming a multimeric L10(L12)X complex. One or more lysine residues are methylated.

Functionally, forms part of the ribosomal stalk which helps the ribosome interact with GTP-bound translation factors. In Rubrobacter xylanophilus (strain DSM 9941 / JCM 11954 / NBRC 16129 / PRD-1), this protein is Large ribosomal subunit protein uL11.